The following is a 72-amino-acid chain: High-potential iron-sulfur protein isozyme 1 (72 aa).

Alanine 1 carries the N-carbamoylalanine; partial modification. Residues cysteine 34, cysteine 37, cysteine 51, and cysteine 65 each coordinate [4Fe-4S] cluster.

This sequence belongs to the high-potential iron-sulfur protein (HiPIP) family. In terms of assembly, homodimer.

Specific class of high-redox-potential 4Fe-4S ferredoxins. Functions in anaerobic electron transport in most purple and in some other photosynthetic bacteria and in at least one genus (Paracoccus) of halophilic, denitrifying bacteria. This chain is High-potential iron-sulfur protein isozyme 1, found in Ectothiorhodospira mobilis.